We begin with the raw amino-acid sequence, 358 residues long: Ferredoxin--NADP reductase (358 aa).

FAD contacts are provided by D38, Q46, Y51, V91, F126, D301, and T341.

Belongs to the ferredoxin--NADP reductase type 2 family. In terms of assembly, homodimer. The cofactor is FAD.

It carries out the reaction 2 reduced [2Fe-2S]-[ferredoxin] + NADP(+) + H(+) = 2 oxidized [2Fe-2S]-[ferredoxin] + NADPH. In Paracidovorax citrulli (strain AAC00-1) (Acidovorax citrulli), this protein is Ferredoxin--NADP reductase.